The primary structure comprises 379 residues: MSQLELETCNLTLVRYPQVAENSALQAWDAADEYLLRELSTMEIAPGPRLIFNDTFGALACGLQAQSPVSISDSYLSQLATRHNLELNGYDADAVTLLDSMADLPDAPALVVMRIPKTIALLEHQLRMLRKVVTPQTRIIAGAKARDIHTSTLQLFERVMGPTKTSLAWKKARLVHCEWAELKVSEQSLTTEWELDGYGYRIQNHANVYSRNGLDIGARFFMQHLPEQIDGKIIDLGCGNGVIGLAALEANPDATVGFFDESYMAVASSQMNVEVNRPQDVERCSFVVNNGLSRVRRDTLQAVLCNPPFHQLQAVTDEIAWQMFMDARRCLQVGGELRIVGNRHLDYFHKLKRLFGNCETIASNTKFAVLRAVKTNSSR.

It belongs to the methyltransferase superfamily. RlmG family.

It is found in the cytoplasm. It catalyses the reaction guanosine(1835) in 23S rRNA + S-adenosyl-L-methionine = N(2)-methylguanosine(1835) in 23S rRNA + S-adenosyl-L-homocysteine + H(+). In terms of biological role, specifically methylates the guanine in position 1835 (m2G1835) of 23S rRNA. The protein is Ribosomal RNA large subunit methyltransferase G of Pectobacterium atrosepticum (strain SCRI 1043 / ATCC BAA-672) (Erwinia carotovora subsp. atroseptica).